Reading from the N-terminus, the 164-residue chain is Protein CURVATURE THYLAKOID 1A, chloroplastic (164 aa).

The N-terminal 62 residues, 1–62, are a transit peptide targeting the chloroplast; the sequence is MAISVAASSS…LQKVELLKTR (62 aa). Ala63 carries the N-acetylalanine modification. At 63–93 the chain is on the stromal side; it reads ASSEETSSIDTNELITDLKEKWDGLENKSTV. The chain crosses the membrane as a helical span at residues 94 to 114; the sequence is LIYGGGAIVAVWLSSIVVGAI. The Lumenal portion of the chain corresponds to 115 to 116; that stretch reads NS. A helical membrane pass occupies residues 117–137; it reads VPLLPKVMELVGLGYTGWFVY. Residues 138-164 lie on the Stromal side of the membrane; it reads RYLLFKSSRKELAEDIESLKKKIAGSE. Positions 140–164 form a coiled coil; the sequence is LLFKSSRKELAEDIESLKKKIAGSE.

This sequence belongs to the CURT family. As to quaternary structure, homo- and heterodimers and trimers.

It is found in the plastid. It localises to the chloroplast. The protein resides in the plastoglobule. Its subcellular location is the membrane. The protein localises to the chloroplast thylakoid membrane. Functionally, determines thylakoid architecture by inducing membrane curvature. The polypeptide is Protein CURVATURE THYLAKOID 1A, chloroplastic (CURT1A) (Arabidopsis thaliana (Mouse-ear cress)).